The chain runs to 336 residues: Histidinol-phosphate aminotransferase (336 aa).

K204 is modified (N6-(pyridoxal phosphate)lysine).

This sequence belongs to the class-II pyridoxal-phosphate-dependent aminotransferase family. Histidinol-phosphate aminotransferase subfamily. Pyridoxal 5'-phosphate serves as cofactor.

The catalysed reaction is L-histidinol phosphate + 2-oxoglutarate = 3-(imidazol-4-yl)-2-oxopropyl phosphate + L-glutamate. It functions in the pathway amino-acid biosynthesis; L-histidine biosynthesis; L-histidine from 5-phospho-alpha-D-ribose 1-diphosphate: step 7/9. The chain is Histidinol-phosphate aminotransferase from Thermococcus kodakarensis (strain ATCC BAA-918 / JCM 12380 / KOD1) (Pyrococcus kodakaraensis (strain KOD1)).